The primary structure comprises 638 residues: 1-deoxy-D-xylulose-5-phosphate synthase (638 aa).

Thiamine diphosphate-binding positions include His-79 and 120-122 (GHS). Asp-151 contributes to the Mg(2+) binding site. Thiamine diphosphate-binding positions include 152–153 (GA), Asn-182, Tyr-291, and Glu-373. Asn-182 is a Mg(2+) binding site.

It belongs to the transketolase family. DXPS subfamily. Homodimer. Mg(2+) is required as a cofactor. It depends on thiamine diphosphate as a cofactor.

It catalyses the reaction D-glyceraldehyde 3-phosphate + pyruvate + H(+) = 1-deoxy-D-xylulose 5-phosphate + CO2. The protein operates within metabolic intermediate biosynthesis; 1-deoxy-D-xylulose 5-phosphate biosynthesis; 1-deoxy-D-xylulose 5-phosphate from D-glyceraldehyde 3-phosphate and pyruvate: step 1/1. In terms of biological role, catalyzes the acyloin condensation reaction between C atoms 2 and 3 of pyruvate and glyceraldehyde 3-phosphate to yield 1-deoxy-D-xylulose-5-phosphate (DXP). This Xanthomonas campestris pv. campestris (strain 8004) protein is 1-deoxy-D-xylulose-5-phosphate synthase.